The sequence spans 91 residues: MGCIKSKQECNLHKTIRLKRNKENDEMHNKEKVCLVQANQEDSKFCSCTASPLLLEYAHRLSEDIVNKAVRQWAEVDSKYSDIPYIESDAV.

Residue Gly2 is the site of N-myristoyl glycine attachment.

Belongs to the small membrane AKAP family. Post-translationally, may be palmitoylated at Cys-3.

Its subcellular location is the cell membrane. Functionally, binds to type I regulatory subunits of protein kinase A and may anchor/target them to the plasma membrane. The chain is Small membrane A-kinase anchor protein from Xenopus tropicalis (Western clawed frog).